Consider the following 391-residue polypeptide: Phosphoglycerate kinase (391 aa).

Residues 21-23 (DLN), Arg36, 59-62 (HLGR), Arg113, and Arg146 each bind substrate. ATP is bound by residues Lys197, Glu319, and 345–348 (GGDT).

Belongs to the phosphoglycerate kinase family. As to quaternary structure, monomer.

It localises to the cytoplasm. The catalysed reaction is (2R)-3-phosphoglycerate + ATP = (2R)-3-phospho-glyceroyl phosphate + ADP. It participates in carbohydrate degradation; glycolysis; pyruvate from D-glyceraldehyde 3-phosphate: step 2/5. The protein is Phosphoglycerate kinase of Xylella fastidiosa (strain 9a5c).